Reading from the N-terminus, the 176-residue chain is Bifunctional protein PyrR (176 aa).

The short motif at 93–105 is the PRPP-binding element; the sequence is VILVDDVLYTGRT.

It belongs to the purine/pyrimidine phosphoribosyltransferase family. PyrR subfamily. In terms of assembly, homodimer and homohexamer; in equilibrium.

The catalysed reaction is UMP + diphosphate = 5-phospho-alpha-D-ribose 1-diphosphate + uracil. In terms of biological role, regulates transcriptional attenuation of the pyrimidine nucleotide (pyr) operon by binding in a uridine-dependent manner to specific sites on pyr mRNA. This disrupts an antiterminator hairpin in the RNA and favors formation of a downstream transcription terminator, leading to a reduced expression of downstream genes. Its function is as follows. Also displays a weak uracil phosphoribosyltransferase activity which is not physiologically significant. This chain is Bifunctional protein PyrR, found in Streptococcus mutans serotype c (strain ATCC 700610 / UA159).